Consider the following 193-residue polypeptide: Cysteine and glycine-rich protein 1 (193 aa).

An LIM zinc-binding 1 domain is found at C10 to C61. Positions K64–K69 match the Nuclear localization signal motif. S81 bears the Phosphoserine mark. At K84 the chain carries N6-acetyllysine. A Glycyl lysine isopeptide (Lys-Gly) (interchain with G-Cter in SUMO2) cross-link involves residue K91. An N6-acetyllysine mark is found at K112, K131, K137, and K161. The region spanning C119–C170 is the LIM zinc-binding 2 domain. A Phosphoserine modification is found at S192.

In terms of assembly, interacts with ASCC1; ASCC2 and TRIP4.

The protein resides in the nucleus. Could play a role in neuronal development. This is Cysteine and glycine-rich protein 1 (CSRP1) from Pongo abelii (Sumatran orangutan).